The chain runs to 166 residues: Deglycase TK1284 (166 aa).

The region spanning 1 to 166 is the PfpI endopeptidase domain; sequence MKVLILSADG…WMREFVKLLR (166 aa). His-101 is an active-site residue.

Belongs to the peptidase C56 family. Homohexamer formed by a dimer of trimers that assemble into a hollow ring structure.

The protein resides in the cytoplasm. It carries out the reaction N(omega)-(1-hydroxy-2-oxopropyl)-L-arginyl-[protein] + H2O = lactate + L-arginyl-[protein] + H(+). The catalysed reaction is N(6)-(1-hydroxy-2-oxopropyl)-L-lysyl-[protein] + H2O = lactate + L-lysyl-[protein] + H(+). It catalyses the reaction S-(1-hydroxy-2-oxopropyl)-L-cysteinyl-[protein] + H2O = lactate + L-cysteinyl-[protein] + H(+). The enzyme catalyses N(omega)-(1-hydroxy-2-oxoethyl)-L-arginyl-[protein] + H2O = L-arginyl-[protein] + glycolate + H(+). It carries out the reaction N(6)-(1-hydroxy-2-oxoethyl)-L-lysyl-[protein] + H2O = glycolate + L-lysyl-[protein] + H(+). The catalysed reaction is S-(1-hydroxy-2-oxoethyl)-L-cysteinyl-[protein] + H2O = glycolate + L-cysteinyl-[protein] + H(+). Its function is as follows. Deglycase that catalyzes the deglycation of the Maillard adducts formed between amino groups of proteins and reactive carbonyl groups of glyoxals. Thus, functions as a protein deglycase that repairs methylglyoxal- and glyoxal-glycated proteins, and releases repaired proteins and lactate or glycolate, respectively. Deglycates cysteine, arginine and lysine residues in proteins, and thus reactivates these proteins by reversing glycation by glyoxals. Acts on early glycation intermediates (hemithioacetals and aminocarbinols), preventing the formation of advanced glycation endproducts (AGE) that cause irreversible damage. Also displays proteolytic activity. In Thermococcus kodakarensis (strain ATCC BAA-918 / JCM 12380 / KOD1) (Pyrococcus kodakaraensis (strain KOD1)), this protein is Deglycase TK1284.